We begin with the raw amino-acid sequence, 967 residues long: RNA polymerase II C-terminal domain phosphatase-like 1 (967 aa).

The short motif at 38-41 (RKKK) is the Nuclear localization signal (NLS) element. One can recognise an FCP1 homology domain in the interval 151–401 (LNLRCLGIVF…TPVLCVARNV (251 aa)). Disordered stretches follow at residues 548 to 611 (SEPS…VQSR) and 643 to 712 (MEKH…RNSD). Residues 590-603 (PSEPSFPQRPPVQA) are compositionally biased toward pro residues. Residues 665 to 684 (RMLHENRRPPKESLRRDEQL) show a composition bias toward basic and acidic residues. DRBM domains follow at residues 724-792 (TETS…NLAD) and 855-925 (GSIT…SVRS). The tract at residues 928-967 (GQPLHKRQGSPRSFGGMSNKRLKPDFQRSLQRMPSSGRYS) is disordered. The interval 945–967 (SNKRLKPDFQRSLQRMPSSGRYS) is required for nuclear localization (NLS). A Nuclear localization signal (NLS) motif is present at residues 947–951 (KRLKP). Over residues 955–967 (RSLQRMPSSGRYS) the composition is skewed to polar residues.

In terms of assembly, interacts with FREE1, ANAC019, MYB3, MYB4 and MYB32. Binds to DMS3. Interacts with RCF3. Interacts with RS40 and RS41. Interacts with EIF4A3. Interacts with UPF3. Mg(2+) serves as cofactor. Requires Co(2+) as cofactor. Mn(2+) is required as a cofactor. In terms of tissue distribution, expressed at very low levels in roots, leaves, stems, flowers and siliques.

It localises to the nucleus. It is found in the nucleus speckle. It catalyses the reaction O-phospho-L-seryl-[protein] + H2O = L-seryl-[protein] + phosphate. The catalysed reaction is O-phospho-L-threonyl-[protein] + H2O = L-threonyl-[protein] + phosphate. Processively dephosphorylates 'Ser-5' but not 'Ser-2' of the heptad repeats YSPTSPS in the C-terminal domain of the largest RNA polymerase II subunit (RPB1). This promotes the activity of RNA polymerase II. Together with CPL2, required for male gametes fertility. Multifunctional regulator that modulates plant growth, stress, and phytohormones responses. Negative regulator of stress gene transcription involved in abscisic acid (ABA) mediated and jasmonic acid (JA) mediated signaling pathways, NaCl, osmotic stress, wounding, and cold resistance. Negatively regulates the expression of jasmonic acid (JA) biosynthetic genes in response to wounding. Forms a complex with RCF3 that modulates co-transcriptional processes such as mRNA capping and polyadenylation, and functions to repress stress-inducible gene expression. Dephosphorylates RCF3. Involved in the dephosphorylation of EIF4A3. This dephosphorylation retains EIF4A3 in the nucleus and limits its accumulation in the cytoplasm. Is essential for the degradation of the nonsense-mediated mRNA decay (NMD) transcripts. The protein is RNA polymerase II C-terminal domain phosphatase-like 1 of Arabidopsis thaliana (Mouse-ear cress).